Here is a 579-residue protein sequence, read N- to C-terminus: MNIRNLLNDRVKSAMNDAGIPADYSPHLAVSKKAGFGDYQANGAMGAAKALKTNPREVAQKIIDNLDLNGIASKVEIAGPGFINIHLDPKWLAQQTVAVTNSTNLGILPKNNPETVVIDYSSPNLAKEMHVGHLRSTIIGDAIARVLEFTGDKVIRQNHVGDWGTQFGMLIAELEDQLGSGERPELALQDLEGFYQQAKKHFDDDPAFADRARDYVVKLQSGDAQVNKLWQEFRRVSLLHAEEIYRKLNVTLGEADVRGESAYNDDLAPVVAELEAQGLAVEDQGAKVVFLHELADKNGDPSVAIIQKKDGGYLYSTSDLAALRYRVGTLKANRILYFIDARQSLHMQQVFTLARKAGFADEWLSTEHHAFGTMLGSDGKPFKTRSGGTVKLAQLLDEAVERAAKEVRTKNPDLTEEEMAEVASKVGIGAVKYADLCKTRTNDYVFNWESMLAFEGNTGPYMQYAYTRIRSIFRRANENMDTFESEVNLTEPQEVQLAIKLLQLPEIVEQIAADAYPHVMCNYLYDLASLFMTFYEACPILKEGVEPAVKTSRLQLSKGVARTLAQGLDLLGIEVMEKM.

The 'HIGH' region signature appears at 123–133 (PNLAKEMHVGH).

The protein belongs to the class-I aminoacyl-tRNA synthetase family. In terms of assembly, monomer.

The protein resides in the cytoplasm. It catalyses the reaction tRNA(Arg) + L-arginine + ATP = L-arginyl-tRNA(Arg) + AMP + diphosphate. In Saccharophagus degradans (strain 2-40 / ATCC 43961 / DSM 17024), this protein is Arginine--tRNA ligase.